A 240-amino-acid chain; its full sequence is Aspartate/glutamate leucyltransferase (240 aa).

The protein belongs to the R-transferase family. Bpt subfamily.

It is found in the cytoplasm. It carries out the reaction N-terminal L-glutamyl-[protein] + L-leucyl-tRNA(Leu) = N-terminal L-leucyl-L-glutamyl-[protein] + tRNA(Leu) + H(+). The catalysed reaction is N-terminal L-aspartyl-[protein] + L-leucyl-tRNA(Leu) = N-terminal L-leucyl-L-aspartyl-[protein] + tRNA(Leu) + H(+). Its function is as follows. Functions in the N-end rule pathway of protein degradation where it conjugates Leu from its aminoacyl-tRNA to the N-termini of proteins containing an N-terminal aspartate or glutamate. This Bordetella avium (strain 197N) protein is Aspartate/glutamate leucyltransferase.